The sequence spans 528 residues: Keratin, type II cytoskeletal 78 (528 aa).

Positions 1-104 (MSLSPCRARR…DPQFQVVRTQ (104 aa)) are head. The segment at 23-45 (VGRGRTGFSSRSLSSFGGCRGGS) is disordered. Over residues 24-39 (GRGRTGFSSRSLSSFG) the composition is skewed to low complexity. Residues 105–140 (ETQQIRVLNNQFASFIDKVRFLEQQNKVLETKWHLL) are coil 1A. The IF rod domain maps to 105–418 (ETQQIRVLNN…RLLEGEECRM (314 aa)). The linker 1 stretch occupies residues 141-159 (QQQGLSDRPQGLESFFEAY). Residues 160–252 (LVRLRTQLEE…LYEEELGQLQ (93 aa)) are coil 1B. The tract at residues 253–275 (TQASDMSVVLSMDNNRCLDFRDL) is linker 12. The interval 276–415 (IAEVRARYEE…TYRRLLEGEE (140 aa)) is coil 2. A tail region spans residues 416-528 (CRMSGECASQ…ESSLKTSVTY (113 aa)).

Belongs to the intermediate filament family. As to quaternary structure, heterotetramer of two type I and two type II keratins.

In Bos taurus (Bovine), this protein is Keratin, type II cytoskeletal 78 (KRT78).